A 129-amino-acid polypeptide reads, in one-letter code: Small ribosomal subunit protein uS11 (129 aa).

The interval Thr-108–Lys-129 is disordered. A compositionally biased stretch (basic residues) spans Pro-117–Lys-129.

The protein belongs to the universal ribosomal protein uS11 family. As to quaternary structure, part of the 30S ribosomal subunit. Interacts with proteins S7 and S18. Binds to IF-3.

Functionally, located on the platform of the 30S subunit, it bridges several disparate RNA helices of the 16S rRNA. Forms part of the Shine-Dalgarno cleft in the 70S ribosome. In Mycoplasmopsis synoviae (strain 53) (Mycoplasma synoviae), this protein is Small ribosomal subunit protein uS11.